The primary structure comprises 371 residues: 4-hydroxy-3-methylbut-2-en-1-yl diphosphate synthase (flavodoxin) (371 aa).

Positions 271, 274, 306, and 313 each coordinate [4Fe-4S] cluster.

It belongs to the IspG family. [4Fe-4S] cluster serves as cofactor.

The enzyme catalyses (2E)-4-hydroxy-3-methylbut-2-enyl diphosphate + oxidized [flavodoxin] + H2O + 2 H(+) = 2-C-methyl-D-erythritol 2,4-cyclic diphosphate + reduced [flavodoxin]. It functions in the pathway isoprenoid biosynthesis; isopentenyl diphosphate biosynthesis via DXP pathway; isopentenyl diphosphate from 1-deoxy-D-xylulose 5-phosphate: step 5/6. Functionally, converts 2C-methyl-D-erythritol 2,4-cyclodiphosphate (ME-2,4cPP) into 1-hydroxy-2-methyl-2-(E)-butenyl 4-diphosphate. This Actinobacillus succinogenes (strain ATCC 55618 / DSM 22257 / CCUG 43843 / 130Z) protein is 4-hydroxy-3-methylbut-2-en-1-yl diphosphate synthase (flavodoxin).